A 141-amino-acid polypeptide reads, in one-letter code: MSVKKVIKIIKLQIPGGKANPAPPIGPALGAAGVNIMGFCKEFNAATQDKPGDLLPVVITVYADKTFTFITKQPPVSSLIKKTLNLESGSKIPNRNKVGKLTQAQVEAIAEQKMKDMDIVLLESAKRMVEGTARSMGIDVE.

This sequence belongs to the universal ribosomal protein uL11 family. Part of the ribosomal stalk of the 50S ribosomal subunit. Interacts with L10 and the large rRNA to form the base of the stalk. L10 forms an elongated spine to which L12 dimers bind in a sequential fashion forming a multimeric L10(L12)X complex. In terms of processing, one or more lysine residues are methylated.

Forms part of the ribosomal stalk which helps the ribosome interact with GTP-bound translation factors. The chain is Large ribosomal subunit protein uL11 from Chlamydia pneumoniae (Chlamydophila pneumoniae).